The chain runs to 501 residues: NAD(P)H-quinone oxidoreductase subunit 2, chloroplastic (501 aa).

Transmembrane regions (helical) follow at residues 15–35 (ILPE…DLIL), 42–62 (VFFF…IFQL), 82–102 (IFRI…IDFI), 107–127 (LAIT…MFLC), 132–152 (LITI…LSGY), 167–187 (LLIG…LYGL), 210–230 (FGSL…LSLV), 244–264 (PTPV…ALLV), 278–298 (WHSL…LVAI), 307–327 (LAYS…TGNF), 334–354 (IVYL…IILF), 378–398 (FSLA…GFFG), 410–430 (GLYF…YYYL), and 466–486 (VSII…NPII).

This sequence belongs to the complex I subunit 2 family. In terms of assembly, NDH is composed of at least 16 different subunits, 5 of which are encoded in the nucleus.

It localises to the plastid. The protein resides in the chloroplast thylakoid membrane. It carries out the reaction a plastoquinone + NADH + (n+1) H(+)(in) = a plastoquinol + NAD(+) + n H(+)(out). It catalyses the reaction a plastoquinone + NADPH + (n+1) H(+)(in) = a plastoquinol + NADP(+) + n H(+)(out). In terms of biological role, NDH shuttles electrons from NAD(P)H:plastoquinone, via FMN and iron-sulfur (Fe-S) centers, to quinones in the photosynthetic chain and possibly in a chloroplast respiratory chain. The immediate electron acceptor for the enzyme in this species is believed to be plastoquinone. Couples the redox reaction to proton translocation, and thus conserves the redox energy in a proton gradient. This chain is NAD(P)H-quinone oxidoreductase subunit 2, chloroplastic, found in Physcomitrium patens (Spreading-leaved earth moss).